The following is a 347-amino-acid chain: GMP reductase (347 aa).

108–131 lines the NADP(+) pocket; sequence ADFVKMQQILALSPGLKFICIDVA. Residues glycine 181 and glycine 183 each coordinate K(+). The Thioimidate intermediate role is filled by cysteine 186. NADP(+) is bound at residue 216 to 239; it reads IVSDGGCSVPGDVAKAFGGGADFV.

It belongs to the IMPDH/GMPR family. GuaC type 1 subfamily. Homotetramer.

The catalysed reaction is IMP + NH4(+) + NADP(+) = GMP + NADPH + 2 H(+). Its function is as follows. Catalyzes the irreversible NADPH-dependent deamination of GMP to IMP. It functions in the conversion of nucleobase, nucleoside and nucleotide derivatives of G to A nucleotides, and in maintaining the intracellular balance of A and G nucleotides. In Serratia proteamaculans (strain 568), this protein is GMP reductase.